The following is a 276-amino-acid chain: Putative olfactory receptor 10J6 (276 aa).

Residues 1–25 lie on the Extracellular side of the membrane; sequence MRRKNLTEVTEFVFLGFSRFHKHHI. Residue Asn-5 is glycosylated (N-linked (GlcNAc...) asparagine). Residues 26 to 46 form a helical membrane-spanning segment; that stretch reads TLFVVFLILYTLTVAGNAIIM. The Cytoplasmic segment spans residues 47-54; sequence TIICIDRH. The chain crosses the membrane as a helical span at residues 55–75; that stretch reads LHTPMYFFLSMLASSKTVYTL. Residues 76-99 lie on the Extracellular side of the membrane; the sequence is FIIPQMLSSFVTQTQPISLAGCTT. A disulfide bridge links Cys-97 with Cys-188. Residues 100-120 form a helical membrane-spanning segment; the sequence is QTFFFVTLAINNCFLLTVMGY. At 121–139 the chain is on the cytoplasmic side; sequence DHYMAICNPLRYRVITSKK. Residues 140-160 traverse the membrane as a helical segment; that stretch reads VCVQLVCGAFSIGLAMAAVQV. The Extracellular portion of the chain corresponds to 161-196; sequence TSIFTLPFCHTVVGHFFCDILPVMKLSCINTTINEI. Asn-190 is a glycosylation site (N-linked (GlcNAc...) asparagine). Residues 197 to 216 traverse the membrane as a helical segment; sequence INFVVRLFVILVPMGLVFIS. Over 217–236 the chain is Cytoplasmic; sequence YVLIISTVLKIASAEGWKKT. Residues 237-257 traverse the membrane as a helical segment; the sequence is FATCAFHLTVVIVHYGCASIA. Over 258–270 the chain is Extracellular; it reads YLMPKSENSIEQD. The chain crosses the membrane as a helical span at residues 271 to 276; the sequence is LLLSVT.

The protein belongs to the G-protein coupled receptor 1 family.

It is found in the cell membrane. Its function is as follows. Odorant receptor. The chain is Putative olfactory receptor 10J6 (OR10J6P) from Homo sapiens (Human).